The following is a 576-amino-acid chain: Urease subunit alpha (576 aa).

The Urease domain occupies 132-576 (GGIDTHIHFI…LPMAQRYFLF (445 aa)). Residues His137, His139, and Lys220 each contribute to the Ni(2+) site. Lys220 is modified (N6-carboxylysine). A substrate-binding site is contributed by His222. Positions 249 and 275 each coordinate Ni(2+). His323 serves as the catalytic Proton donor. Asp363 contacts Ni(2+).

The protein belongs to the metallo-dependent hydrolases superfamily. Urease alpha subunit family. As to quaternary structure, heterotrimer of UreA (gamma), UreB (beta) and UreC (alpha) subunits. Three heterotrimers associate to form the active enzyme. Ni cation is required as a cofactor. Post-translationally, carboxylation allows a single lysine to coordinate two nickel ions.

The protein resides in the cytoplasm. The enzyme catalyses urea + 2 H2O + H(+) = hydrogencarbonate + 2 NH4(+). The protein operates within nitrogen metabolism; urea degradation; CO(2) and NH(3) from urea (urease route): step 1/1. The chain is Urease subunit alpha from Paenarthrobacter aurescens (strain TC1).